Consider the following 35-residue polypeptide: Cupiennin-2a (35 aa).

Position 35 is a lysine amide (lysine 35).

As to expression, expressed by the venom gland.

The protein localises to the secreted. In Cupiennius salei (American wandering spider), this protein is Cupiennin-2a.